The following is a 544-amino-acid chain: Chaperonin GroEL (544 aa).

ATP is bound by residues 30–33, Lys51, 87–91, Gly415, 479–481, and Asp495; these read TLGP, DGTTT, and NAA. Positions 525-537 are enriched in low complexity; the sequence is PQDTPATAAAPDM. Residues 525–544 form a disordered region; it reads PQDTPATAAAPDMGGMGGMM.

Belongs to the chaperonin (HSP60) family. In terms of assembly, forms a cylinder of 14 subunits composed of two heptameric rings stacked back-to-back. Interacts with the co-chaperonin GroES.

It localises to the cytoplasm. It catalyses the reaction ATP + H2O + a folded polypeptide = ADP + phosphate + an unfolded polypeptide.. Its function is as follows. Together with its co-chaperonin GroES, plays an essential role in assisting protein folding. The GroEL-GroES system forms a nano-cage that allows encapsulation of the non-native substrate proteins and provides a physical environment optimized to promote and accelerate protein folding. This Ruthia magnifica subsp. Calyptogena magnifica protein is Chaperonin GroEL.